Consider the following 479-residue polypeptide: Lactaldehyde dehydrogenase (479 aa).

Leu150 is an NAD(+) binding site. A (S)-lactate-binding site is contributed by Arg161. NAD(+)-binding positions include 176-179 (KPSE), Gln214, and Ser230. Glu251 is a binding site for (S)-lactate. Catalysis depends on residues Glu251 and Cys285. Asn286 is a binding site for (S)-lactate. Arg336 contacts NAD(+). (S)-lactate is bound by residues Glu443 and His449.

Belongs to the aldehyde dehydrogenase family. In terms of assembly, homotetramer.

The catalysed reaction is (S)-lactaldehyde + NAD(+) + H2O = (S)-lactate + NADH + 2 H(+). It catalyses the reaction glycolaldehyde + NAD(+) + H2O = glycolate + NADH + 2 H(+). The protein operates within carbohydrate degradation; L-fucose degradation. It functions in the pathway carbohydrate degradation; L-rhamnose degradation. With respect to regulation, substrate inhibition is very strong with lactaldehyde, diminishing progressively with glycolaldehyde, glyceraldehyde or methylglyoxal. Inhibited by p-hydroxy mercuribenzoate and by some cations, including Mn(2+), Ca(2+), Cu(2+) and Zn(2+). Inhibited by NADH. Catalyzes the irreversible oxidation of L-lactaldehyde to L-lactate. Also shows high activity with glycolaldehyde and L-glyceraldehyde. Has weaker activity with various aldehydes such as methylglyoxal, propionaldehyde or benzaldehyde. Involved in the degradation of lactaldehyde produced during metabolism of L-fucose and L-rhamnose. It may be involved in several other metabolic pathways. This chain is Lactaldehyde dehydrogenase (aldA), found in Escherichia coli (strain K12).